The sequence spans 181 residues: ATP synthase subunit b (181 aa).

Residues 24–44 (LFPNLPNFIAHLLATIILVIV) form a helical membrane-spanning segment.

The protein belongs to the ATPase B chain family. In terms of assembly, F-type ATPases have 2 components, F(1) - the catalytic core - and F(0) - the membrane proton channel. F(1) has five subunits: alpha(3), beta(3), gamma(1), delta(1), epsilon(1). F(0) has three main subunits: a(1), b(2) and c(10-14). The alpha and beta chains form an alternating ring which encloses part of the gamma chain. F(1) is attached to F(0) by a central stalk formed by the gamma and epsilon chains, while a peripheral stalk is formed by the delta and b chains.

Its subcellular location is the cell membrane. In terms of biological role, f(1)F(0) ATP synthase produces ATP from ADP in the presence of a proton or sodium gradient. F-type ATPases consist of two structural domains, F(1) containing the extramembraneous catalytic core and F(0) containing the membrane proton channel, linked together by a central stalk and a peripheral stalk. During catalysis, ATP synthesis in the catalytic domain of F(1) is coupled via a rotary mechanism of the central stalk subunits to proton translocation. Component of the F(0) channel, it forms part of the peripheral stalk, linking F(1) to F(0). The sequence is that of ATP synthase subunit b from Mycoplasma mycoides subsp. mycoides SC (strain CCUG 32753 / NCTC 10114 / PG1).